We begin with the raw amino-acid sequence, 590 residues long: DEAD-box ATP-dependent RNA helicase 27 (590 aa).

Residues 1 to 92 form a disordered region; the sequence is MAPAPATTSS…EKGNEGGSGI (92 aa). Residues 27–62 show a composition bias toward acidic residues; it reads SDSESEELSYDTAAADEEEGEEEAPNQMEELEEEQE. A coiled-coil region spans residues 40 to 87; that stretch reads AADEEEGEEEAPNQMEELEEEQEEEKKEKKQKKEMSKEKKRKKEKGNE. The span at 63–76 shows a compositional bias: basic and acidic residues; the sequence is EEKKEKKQKKEMSK. Residues 96 to 124 carry the Q motif motif; sequence MLFSELGVSEPTARAIREMNYTYLTQIQA. The region spanning 127–302 is the Helicase ATP-binding domain; it reads IPHLLNGKDV…KLSFEKNEES (176 aa). 140–147 serves as a coordination point for ATP; it reads AKTGSGKT. The DEAD box signature appears at 250-253; sequence DEAD. Positions 335–488 constitute a Helicase C-terminal domain; sequence RFLVLYAFLK…NKVPNLQSHL (154 aa). The tract at residues 551–590 is disordered; it reads SASKHRRKMRKVDGGRRHGISAANPYGRKGGDDKRQFARF. Positions 579-590 are enriched in basic and acidic residues; that stretch reads KGGDDKRQFARF.

It belongs to the DEAD box helicase family. DDX18/HAS1 subfamily.

The enzyme catalyses ATP + H2O = ADP + phosphate + H(+). This is DEAD-box ATP-dependent RNA helicase 27 from Oryza sativa subsp. japonica (Rice).